A 53-amino-acid chain; its full sequence is uncharacterized protein (53 aa).

This is an uncharacterized protein from Archaeoglobus fulgidus (strain ATCC 49558 / DSM 4304 / JCM 9628 / NBRC 100126 / VC-16).